The chain runs to 501 residues: Ribose import ATP-binding protein RbsA (501 aa).

ABC transporter domains lie at 5-241 and 252-495; these read LQLK…VGRK and APGD…VGKL. Position 37–44 (37–44) interacts with ATP; that stretch reads GENGAGKS.

It belongs to the ABC transporter superfamily. Ribose importer (TC 3.A.1.2.1) family. As to quaternary structure, the complex is composed of an ATP-binding protein (RbsA), two transmembrane proteins (RbsC) and a solute-binding protein (RbsB).

It is found in the cell inner membrane. It catalyses the reaction D-ribose(out) + ATP + H2O = D-ribose(in) + ADP + phosphate + H(+). Part of the ABC transporter complex RbsABC involved in ribose import. Responsible for energy coupling to the transport system. The protein is Ribose import ATP-binding protein RbsA of Shigella sonnei (strain Ss046).